A 211-amino-acid polypeptide reads, in one-letter code: Metalloproteinase inhibitor 3 (211 aa).

A signal peptide spans 1–23; that stretch reads MTPWLGLVVLLSCWSLGHWGTEA. Cys-24 is a binding site for Zn(2+). Involved in metalloproteinase-binding regions lie at residues 24-27 and 88-89; these read CTCS and ES. Intrachain disulfides connect Cys-24/Cys-91, Cys-26/Cys-118, Cys-36/Cys-143, Cys-145/Cys-192, Cys-150/Cys-155, and Cys-163/Cys-184. The region spanning 24–143 is the NTR domain; the sequence is CTCSPSHPQD…GLNYRYHLGC (120 aa). The segment at 105-188 is mediates interaction with EFEMP1; that stretch reads TGRVYEGKMY…SKHYACIRQK (84 aa).

The protein belongs to the protease inhibitor I35 (TIMP) family. Interacts with EFEMP1. Interacts with KDR.

The protein localises to the secreted. It localises to the extracellular space. The protein resides in the extracellular matrix. Functionally, mediates a variety of processes including matrix regulation and turnover, inflammation, and angiogenesis, through reversible inhibition of zinc protease superfamily enzymes, primarily matrix metalloproteinases (MMPs). Regulates extracellular matrix (ECM) remodeling through inhibition of matrix metalloproteinases (MMP) including MMP-1, MMP-2, MMP-3, MMP-7, MMP-9, MMP-13, MMP-14 and MMP-15. Additionally, modulates the processing of amyloid precursor protein (APP) and apolipoprotein E receptor ApoER2 by inhibiting two alpha-secretases ADAM10 and ADAM17. Functions as a tumor suppressor and a potent inhibitor of angiogenesis. Exerts its anti-angiogenic effect by directly interacting with vascular endothelial growth factor (VEGF) receptor-2/KDR, preventing its binding to the VEGFA ligand. Selectively induces apoptosis in angiogenic endothelial cells through a caspase-independent cell death pathway. Mechanistically, inhibits matrix-induced focal adhesion kinase PTK2 tyrosine phosphorylation and association with paxillin/PXN and disrupts the incorporation of ITGB3, PTK2 and PXN into focal adhesion contacts on the matrix. This chain is Metalloproteinase inhibitor 3 (Timp3), found in Rattus norvegicus (Rat).